A 598-amino-acid polypeptide reads, in one-letter code: NADH-ubiquinone oxidoreductase chain 5 (598 aa).

14 helical membrane-spanning segments follow: residues 6–26 (LTLI…PPII), 32–52 (MILT…PLTI), 84–100 (YTVI…WSIM), 113–133 (MDKF…FISA), 136–156 (LLQL…LISW), 241–261 (TPVS…FLLI), 272–292 (LMLE…ALCA), 301–320 (IIAF…VGLN), 325–347 (AFLH…GSII), 370–390 (TTCM…AGFF), 409–429 (LMVT…LIIM), 456–476 (LAWG…PMKP), 478–498 (IFTM…ISLI), and 576–596 (LNSA…LSLT).

It belongs to the complex I subunit 5 family.

It localises to the mitochondrion inner membrane. The enzyme catalyses a ubiquinone + NADH + 5 H(+)(in) = a ubiquinol + NAD(+) + 4 H(+)(out). Its function is as follows. Core subunit of the mitochondrial membrane respiratory chain NADH dehydrogenase (Complex I) that is believed to belong to the minimal assembly required for catalysis. Complex I functions in the transfer of electrons from NADH to the respiratory chain. The immediate electron acceptor for the enzyme is believed to be ubiquinone. In Petromyzon marinus (Sea lamprey), this protein is NADH-ubiquinone oxidoreductase chain 5 (MT-ND5).